A 509-amino-acid chain; its full sequence is Maturase K (509 aa).

It belongs to the intron maturase 2 family. MatK subfamily.

It is found in the plastid. The protein localises to the chloroplast. In terms of biological role, usually encoded in the trnK tRNA gene intron. Probably assists in splicing its own and other chloroplast group II introns. In Nicotiana acuminata (Acuminate tobacco), this protein is Maturase K.